A 216-amino-acid polypeptide reads, in one-letter code: MIDRTKNESPAFEESPLTPNVSNLKPFPSQSNKISTPVTDHRRRRSSSVISHVEQETFEDENDQQMLPNMNATWVDQRGAWLIHIVVIVLLRLFYSLFGSTPKWTWTLTNMTYIIGFYIMFHLVKGTPFDFNGGAYDNLTMWEQINDETLYTPTRKFLLIVPIVLFLISNQYYRNDMTLFLSNLAVTVLIGVVPKLGITHRLRISIPGITGRAQIS.

The segment at M1 to I50 is disordered. The Cytoplasmic portion of the chain corresponds to M1 to R78. Residues S9 and S15 each carry the phosphoserine modification. Positions L17–V38 are enriched in polar residues. T18 is modified (phosphothreonine). S22, S29, and S51 each carry phosphoserine. Residues G79–G99 form a helical membrane-spanning segment. Topologically, residues S100–K103 are extracellular. A helical transmembrane segment spans residues W104–V124. Residues K125 to E148 are Cytoplasmic-facing. The chain crosses the membrane as a helical span at residues T149–S169. At N170–M177 the chain is on the extracellular side. The helical transmembrane segment at T178–I198 threads the bilayer. The Cytoplasmic portion of the chain corresponds to T199–S216.

The protein belongs to the ORM family. Component of the SPOTS complex, at least composed of LCB1/2 (LCB1 and/or LCB2), ORM1/2 (ORM1 and/or ORM2), SAC1 and TSC3. In terms of processing, phosphorylated in case of disruption of sphingolipid synthesis. Phosphorylation regulates the inhibitory activity of serine palmitoyltransferases (LCB1 and LCB2).

Its subcellular location is the endoplasmic reticulum membrane. Component of the SPOTS complex that acts as a negative regulator of sphingolipid synthesis. Acts by inhibiting serine palmitoyltransferases (LCB1 and LCB2) activity. Along with ORM1, plays a role in the phosphorylation of LAC1 and YPK1, the distribution of actin patches between mother and daughter cells, and in endocytosis. This chain is Protein ORM2 (ORM2), found in Saccharomyces cerevisiae (strain ATCC 204508 / S288c) (Baker's yeast).